Here is a 317-residue protein sequence, read N- to C-terminus: Zinc finger protein 771 (317 aa).

Over residues 1 to 17 (MPGEQQAEEEEEEEMQE) the composition is skewed to acidic residues. The interval 1 to 63 (MPGEQQAEEE…APSADPARPH (63 aa)) is disordered. Lysine 33 is covalently cross-linked (Glycyl lysine isopeptide (Lys-Gly) (interchain with G-Cter in SUMO2)). Over residues 33-49 (KYEVVKLKIPMDNKEVP) the composition is skewed to basic and acidic residues. 8 consecutive C2H2-type zinc fingers follow at residues 63–85 (HACP…ARTH), 91–113 (FGCT…GRTH), 119–141 (YECP…RRRH), 147–169 (YACA…LRVH), 175–197 (YACP…RRTH), 203–225 (YACA…RRVH), 231–253 (HRCA…ARTH), and 259–281 (YPCA…RRAH).

It belongs to the krueppel C2H2-type zinc-finger protein family.

The protein localises to the nucleus. In terms of biological role, may be involved in transcriptional regulation. The polypeptide is Zinc finger protein 771 (ZNF771) (Homo sapiens (Human)).